The sequence spans 242 residues: tRNA (guanine-N(1)-)-methyltransferase (242 aa).

S-adenosyl-L-methionine contacts are provided by residues Gly113 and 133 to 138 (IGDYVL).

The protein belongs to the RNA methyltransferase TrmD family. As to quaternary structure, homodimer.

It localises to the cytoplasm. It carries out the reaction guanosine(37) in tRNA + S-adenosyl-L-methionine = N(1)-methylguanosine(37) in tRNA + S-adenosyl-L-homocysteine + H(+). Specifically methylates guanosine-37 in various tRNAs. This is tRNA (guanine-N(1)-)-methyltransferase from Shewanella sediminis (strain HAW-EB3).